Consider the following 1235-residue polypeptide: Stress response protein NST1 (1235 aa).

Positions 1–19 (MPSNSKRSMAPPTNVSKQI) are enriched in polar residues. Disordered stretches follow at residues 1-210 (MPSN…AHKV), 300-369 (FENG…LEDA), 416-480 (RMQR…EQRM), 517-848 (EELE…IPAM), 904-987 (GHTS…NQQE), 1001-1023 (LDDS…LPPG), and 1186-1235 (EPDN…TTGF). Low complexity predominate over residues 20-34 (SATSTSKKAPTKPTT). Positions 35 to 52 (QNSIAGAKSTGSPETRTS) are enriched in polar residues. 2 stretches are compositionally biased toward basic residues: residues 70 to 80 (NRKKQKRRQKQ) and 159 to 171 (RKGK…KSRS). Residues 179–189 (SSTSMSTPSAS) show a composition bias toward low complexity. Positions 340–367 (LPDDDEDLDDDYDEDDEDDEPYSEDELE) are enriched in acidic residues. Residues 426–437 (AAASAAHQSMHA) show a composition bias toward low complexity. Acidic residues predominate over residues 445 to 475 (LDEEEYDDEEEEDYDSQDDEEYEEDEMDAMT). Positions 502-714 (AYREKIARER…QAAAVQAAKR (213 aa)) form a coiled coil. Basic and acidic residues-rich tracts occupy residues 517 to 539 (EELE…EAQK) and 549 to 697 (QAKE…REEQ). Residues 698-715 (AAQQAAAQAAAVQAAKRA) are compositionally biased toward low complexity. Polar residues-rich tracts occupy residues 759-772 (QPSQ…SPRS), 779-794 (ISQT…STTI), 831-843 (PMQS…TNPG), and 924-959 (APQS…SQPI). Over residues 1188 to 1198 (DNNSISSSTRG) the composition is skewed to polar residues. Residues 1206 to 1221 (GSPVPGSSLPTPGSGS) are compositionally biased toward low complexity. Positions 1222-1235 (RQFATTNISPTTGF) are enriched in polar residues.

This sequence belongs to the NST1 family.

It is found in the cytoplasm. Its function is as follows. May act as a negative regulator of salt tolerance. The chain is Stress response protein NST1 (NST1) from Coccidioides immitis (strain RS) (Valley fever fungus).